The sequence spans 180 residues: UPF0149 protein XC_0904 (180 aa).

The protein belongs to the UPF0149 family.

This Xanthomonas campestris pv. campestris (strain 8004) protein is UPF0149 protein XC_0904.